A 449-amino-acid chain; its full sequence is MISQFFILSSKGDPLIYKDFRGDSGGRDVAELFYRKLTGLPGGESPVVMYHGDRHFIHIRHSGLYLVATTLENVSPFSLLELLSRLATLLGDYCGSLNEGTISRNVALVYELLDEVLDYGYVQTTSTEMLRNFIQTEAVVSKPFSLFDLSSVGLFGAETQQNKVAPSSAASRPVLSSRSDQSQKNEVFLDVVERLSVLIASNGSLLKVDVQGEIRLKSFLPSGSEICIGLTEEFCVGKSELRGYGPGIRVDEVSFHSSVNLDEFESHRILRLQPPQGELTVMRYQLSDDLPSPLPFRLFPSVQWDQGSGRLQVYLKLRCDLPPKSQALNIHLHLPLPRGVISLSQELSSPDQKAELGEGALHWDLPRVQGGSQLSGLFQMDVPGLQGLPNHGPSPLGLGPASLSFELPRHTCSGLQVRFLRLSFSACGNANPHKWVRHLSHSNAYVIRI.

In terms of domain architecture, MHD spans 184-448 (KNEVFLDVVE…LSHSNAYVIR (265 aa)).

This sequence belongs to the adaptor complexes medium subunit family. Adaptor protein complex 4 (AP-4) is a heterotetramer composed of two large adaptins (epsilon-type subunit AP4E1 and beta-type subunit AP4B1), a medium adaptin (mu-type subunit AP4M1) and a small adaptin (sigma-type AP4S1). Interacts with tyrosine-based sorting signals on the cytoplasmic tail of cargo proteins such as APP, ATG9A, LAMP2 and NAGPA. Interacts with the C-terminal domain of GRID2. Interacts with GRIA1 and GRIA2; the interaction is indirect via CACNG3. Interacts with CACNG3; CACNG3 associates GRIA1 and GRIA2 with the adaptor protein complex 4 (AP-4) to target them to the somatodendritic compartment of neurons. Interacts with HOOK1 and HOOK2; the interactions are direct, mediate the interaction between FTS-Hook-FHIP (FHF) complex and AP-4 and the perinuclear distribution of AP-4.

It is found in the golgi apparatus. Its subcellular location is the trans-Golgi network membrane. It localises to the early endosome. Functionally, component of the adaptor protein complex 4 (AP-4). Adaptor protein complexes are vesicle coat components involved both in vesicle formation and cargo selection. They control the vesicular transport of proteins in different trafficking pathways. AP-4 forms a non clathrin-associated coat on vesicles departing the trans-Golgi network (TGN) and may be involved in the targeting of proteins from the trans-Golgi network (TGN) to the endosomal-lysosomal system. It is also involved in protein sorting to the basolateral membrane in epithelial cells and the proper asymmetric localization of somatodendritic proteins in neurons. Within AP-4, the mu-type subunit AP4M1 is directly involved in the recognition and binding of tyrosine-based sorting signals found in the cytoplasmic part of cargos. The adaptor protein complex 4 (AP-4) may also recognize other types of sorting signal. The chain is AP-4 complex subunit mu-1 from Mus musculus (Mouse).